We begin with the raw amino-acid sequence, 222 residues long: Iodotyrosine deiodinase (222 aa).

FMN-binding positions include Arg-34 to Arg-38 and Pro-61 to Ser-62. Residues Glu-91, Tyr-95, and Lys-116 each coordinate 3-iodo-L-tyrosine. FMN-binding positions include Thr-171–Thr-173 and Arg-212.

This sequence belongs to the nitroreductase family. In terms of assembly, homodimer. FMN is required as a cofactor.

It catalyses the reaction 2 iodide + L-tyrosine + 2 NADP(+) = 3,5-diiodo-L-tyrosine + 2 NADPH + H(+). The catalysed reaction is iodide + L-tyrosine + NADP(+) = 3-iodo-L-tyrosine + NADPH. The enzyme catalyses 3-iodo-L-tyrosine + iodide + NADP(+) = 3,5-diiodo-L-tyrosine + NADPH + H(+). It carries out the reaction L-tyrosine + chloride + NADP(+) = 3-chloro-L-tyrosine + NADPH. It catalyses the reaction bromide + L-tyrosine + NADP(+) = 3-bromo-L-tyrosine + NADPH. In terms of biological role, catalyzes the dehalogenation of halotyrosines such as 3-iodo-L-tyrosine and 3,5-diiodo-L-tyrosine. Likely to also catalyze the dehalogenation of other halotyrosines such as 3-bromo-L-tyrosine, 3-chloro-L-tyrosine and 3-iodo-L-tyrosine. Activity towards 3-iodo-L-tyrosine is much stronger than activity towards 3,5-diiodo-L-tyrosine and 2-iodophenol. The polypeptide is Iodotyrosine deiodinase (Haliscomenobacter hydrossis (strain ATCC 27775 / DSM 1100 / LMG 10767 / O)).